Consider the following 564-residue polypeptide: Cytochrome c oxidase subunit 1 (564 aa).

The disordered stretch occupies residues 1–23; the sequence is MTAVAPRLENYAEPTRPAPTGGA. 7 helical membrane-spanning segments follow: residues 43 to 63, 83 to 103, 122 to 142, 171 to 191, 214 to 234, 259 to 279, and 292 to 312; these read MMYI…ALLI, LFTL…VWGF, LNAF…AGFL, FWII…VNMI, IFVA…AALG, LFWF…FGIV, and FGYI…MAVW. His87 contributes to the Fe(II)-heme a binding site. The Cu cation site is built by His265 and Tyr269. The 1'-histidyl-3'-tyrosine (His-Tyr) cross-link spans 265–269; the sequence is HPEVY. Positions 314 and 315 each coordinate Cu cation. 2 helical membrane passes run 316–336 and 360–380; these read MFVT…LISV and MTWT…GIML. His398 is a binding site for heme a3. 3 helical membrane-spanning segments follow: residues 399-419, 434-454, and 477-497; these read FHYT…YFWF, IHFW…HWVG, and ISTV…WNVF. Residue His400 participates in Fe(II)-heme a binding.

This sequence belongs to the heme-copper respiratory oxidase family. In terms of assembly, associates with subunits II, III and IV to form cytochrome c oxidase. Cu(2+) is required as a cofactor. Requires heme as cofactor.

It is found in the cell membrane. It carries out the reaction 4 Fe(II)-[cytochrome c] + O2 + 8 H(+)(in) = 4 Fe(III)-[cytochrome c] + 2 H2O + 4 H(+)(out). It functions in the pathway energy metabolism; oxidative phosphorylation. Cytochrome c oxidase is the component of the respiratory chain that catalyzes the reduction of oxygen to water. Subunits 1-3 form the functional core of the enzyme complex. CO I is the catalytic subunit of the enzyme. Electrons originating in cytochrome c are transferred via the copper A center of subunit 2 and heme A of subunit 1 to the bimetallic center formed by heme A3 and copper B. This is Cytochrome c oxidase subunit 1 (ctaD) from Corynebacterium diphtheriae (strain ATCC 700971 / NCTC 13129 / Biotype gravis).